Consider the following 84-residue polypeptide: uncharacterized protein (84 aa).

Helical transmembrane passes span 4–20, 27–49, and 59–81; these read AYVL…IKYG, VWKA…WIAF, and IGLA…VYVL.

The protein localises to the cell membrane. This is an uncharacterized protein from Archaeoglobus fulgidus (strain ATCC 49558 / DSM 4304 / JCM 9628 / NBRC 100126 / VC-16).